The following is a 103-amino-acid chain: Co-chaperonin GroES (103 aa).

This sequence belongs to the GroES chaperonin family. As to quaternary structure, heptamer of 7 subunits arranged in a ring. Interacts with the chaperonin GroEL.

The protein resides in the cytoplasm. Together with the chaperonin GroEL, plays an essential role in assisting protein folding. The GroEL-GroES system forms a nano-cage that allows encapsulation of the non-native substrate proteins and provides a physical environment optimized to promote and accelerate protein folding. GroES binds to the apical surface of the GroEL ring, thereby capping the opening of the GroEL channel. The protein is Co-chaperonin GroES of Dinoroseobacter shibae (strain DSM 16493 / NCIMB 14021 / DFL 12).